The following is a 143-amino-acid chain: Fluoride-specific ion channel FluC (143 aa).

Transmembrane regions (helical) follow at residues 3 to 23, 41 to 61, 76 to 96, and 103 to 123; these read AVVW…GSGL, WGTL…LIWL, IVGL…CLVF, and LMVG…VFLG. Positions 81 and 84 each coordinate Na(+).

The protein belongs to the fluoride channel Fluc/FEX (TC 1.A.43) family.

It is found in the cell inner membrane. The catalysed reaction is fluoride(in) = fluoride(out). With respect to regulation, na(+) is not transported, but it plays an essential structural role and its presence is essential for fluoride channel function. Its function is as follows. Fluoride-specific ion channel. Important for reducing fluoride concentration in the cell, thus reducing its toxicity. In Xylella fastidiosa (strain 9a5c), this protein is Fluoride-specific ion channel FluC.